Here is a 261-residue protein sequence, read N- to C-terminus: NAD-capped RNA hydrolase NudC (261 aa).

Residue R74 participates in substrate binding. The Zn(2+) site is built by C103, C106, C121, and C124. Y129 is a binding site for substrate. In terms of domain architecture, Nudix hydrolase spans 130–253 (PRIFPCIIVA…TIARALIEQT (124 aa)). Residues A163, E179, and E183 each contribute to the a divalent metal cation site. The short motif at 164 to 185 (GFVEVGETLEQCVAREVKEETG) is the Nudix box element. Position 197–204 (197–204 (QPWAFPSS)) interacts with substrate. E224 is a binding site for a divalent metal cation. A246 serves as a coordination point for substrate.

The protein belongs to the Nudix hydrolase family. NudC subfamily. Homodimer. Mg(2+) serves as cofactor. It depends on Mn(2+) as a cofactor. Zn(2+) is required as a cofactor.

It catalyses the reaction a 5'-end NAD(+)-phospho-ribonucleoside in mRNA + H2O = a 5'-end phospho-adenosine-phospho-ribonucleoside in mRNA + beta-nicotinamide D-ribonucleotide + 2 H(+). The enzyme catalyses NAD(+) + H2O = beta-nicotinamide D-ribonucleotide + AMP + 2 H(+). It carries out the reaction NADH + H2O = reduced beta-nicotinamide D-ribonucleotide + AMP + 2 H(+). Its function is as follows. mRNA decapping enzyme that specifically removes the nicotinamide adenine dinucleotide (NAD) cap from a subset of mRNAs by hydrolyzing the diphosphate linkage to produce nicotinamide mononucleotide (NMN) and 5' monophosphate mRNA. The NAD-cap is present at the 5'-end of some mRNAs and stabilizes RNA against 5'-processing. Has preference for mRNAs with a 5'-end purine. Catalyzes the hydrolysis of a broad range of dinucleotide pyrophosphates. This chain is NAD-capped RNA hydrolase NudC, found in Vibrio vulnificus (strain CMCP6).